A 209-amino-acid polypeptide reads, in one-letter code: Uracil phosphoribosyltransferase (209 aa).

5-phospho-alpha-D-ribose 1-diphosphate contacts are provided by residues R79, R104, and 131 to 139 (DPMLATGGS). Uracil contacts are provided by residues I194 and 199–201 (GDA). Residue D200 coordinates 5-phospho-alpha-D-ribose 1-diphosphate.

This sequence belongs to the UPRTase family. Mg(2+) serves as cofactor.

It catalyses the reaction UMP + diphosphate = 5-phospho-alpha-D-ribose 1-diphosphate + uracil. Its pathway is pyrimidine metabolism; UMP biosynthesis via salvage pathway; UMP from uracil: step 1/1. Its activity is regulated as follows. Allosterically activated by GTP. Its function is as follows. Catalyzes the conversion of uracil and 5-phospho-alpha-D-ribose 1-diphosphate (PRPP) to UMP and diphosphate. The chain is Uracil phosphoribosyltransferase from Symbiobacterium thermophilum (strain DSM 24528 / JCM 14929 / IAM 14863 / T).